Reading from the N-terminus, the 283-residue chain is Shikimate dehydrogenase (NADP(+)) (283 aa).

Residues S16–S18 and T63 each bind shikimate. K67 functions as the Proton acceptor in the catalytic mechanism. NADP(+) is bound at residue D79. 2 residues coordinate shikimate: N88 and D103. Residues G128 to A132, A223, and G243 contribute to the NADP(+) site.

Belongs to the shikimate dehydrogenase family. In terms of assembly, homodimer.

It carries out the reaction shikimate + NADP(+) = 3-dehydroshikimate + NADPH + H(+). The protein operates within metabolic intermediate biosynthesis; chorismate biosynthesis; chorismate from D-erythrose 4-phosphate and phosphoenolpyruvate: step 4/7. In terms of biological role, involved in the biosynthesis of the chorismate, which leads to the biosynthesis of aromatic amino acids. Catalyzes the reversible NADPH linked reduction of 3-dehydroshikimate (DHSA) to yield shikimate (SA). The polypeptide is Shikimate dehydrogenase (NADP(+)) (Xanthomonas campestris pv. campestris (strain B100)).